The chain runs to 562 residues: Probable sesquiterpene synthase (562 aa).

Mg(2+)-binding residues include aspartate 315, aspartate 319, and glutamate 467. Residues 315-319 (DDIYD) carry the DDXXD motif motif.

It belongs to the terpene synthase family. Tpsa subfamily. Requires Mg(2+) as cofactor. It depends on Mn(2+) as a cofactor.

In terms of biological role, sesquiterpene synthase. The sequence is that of Probable sesquiterpene synthase (SesquiTPS) from Santalum austrocaledonicum (Sandalwood).